We begin with the raw amino-acid sequence, 404 residues long: Tryptophan synthase beta chain (404 aa).

Lysine 98 carries the post-translational modification N6-(pyridoxal phosphate)lysine.

Belongs to the TrpB family. In terms of assembly, tetramer of two alpha and two beta chains. Pyridoxal 5'-phosphate is required as a cofactor.

The enzyme catalyses (1S,2R)-1-C-(indol-3-yl)glycerol 3-phosphate + L-serine = D-glyceraldehyde 3-phosphate + L-tryptophan + H2O. It functions in the pathway amino-acid biosynthesis; L-tryptophan biosynthesis; L-tryptophan from chorismate: step 5/5. The beta subunit is responsible for the synthesis of L-tryptophan from indole and L-serine. In Rhodopseudomonas palustris (strain BisB5), this protein is Tryptophan synthase beta chain.